We begin with the raw amino-acid sequence, 469 residues long: uncharacterized protein (469 aa).

The segment at 203–244 is disordered; the sequence is ACPVPPQGHASSAADQAGVPERGRKRAHEGPGAGEAASAGRG.

This sequence belongs to the epstein-barr virus LF1 family.

This is an uncharacterized protein from Epstein-Barr virus (strain AG876) (HHV-4).